The primary structure comprises 765 residues: FHF complex subunit HOOK interacting protein 2A (765 aa).

Disordered regions lie at residues 193–236 (TLKG…DHLS) and 532–561 (TDIS…KNDG). 2 stretches are compositionally biased toward polar residues: residues 196 to 208 (GQDS…GQSR) and 535 to 550 (SPEN…SSSP).

It belongs to the FHIP family. Expressed in all tissues tested, highly expressed brain. In terms of tissue distribution, only detected at high levels in testis.

Required for proper functioning of the nervous system. In Homo sapiens (Human), this protein is FHF complex subunit HOOK interacting protein 2A.